The primary structure comprises 79 residues: Protein RALF-like 15 (79 aa).

Residues 1-28 form the signal peptide; sequence MGMSKSIKVIVSLALILFLALAATKVEA. Disulfide bonds link C46/C54 and C66/C72.

This sequence belongs to the plant rapid alkalinization factor (RALF) family.

The protein localises to the secreted. Functionally, cell signaling peptide that may regulate plant stress, growth, and development. Mediates a rapid alkalinization of extracellular space by mediating a transient increase in the cytoplasmic Ca(2+) concentration leading to a calcium-dependent signaling events through a cell surface receptor and a concomitant activation of some intracellular mitogen-activated protein kinases. The protein is Protein RALF-like 15 (RALFL15) of Arabidopsis thaliana (Mouse-ear cress).